The following is a 573-amino-acid chain: Patellin-1 (573 aa).

Disordered regions lie at residues 1–74 (MAQE…SVKE) and 111–202 (REFT…DGTK). Residue Ala2 is modified to N-acetylalanine. Basic and acidic residues predominate over residues 18–28 (VKEKPITDKEV). At Thr29 the chain carries Phosphothreonine. Over residues 35–74 (AEKEEVAAPVSDEKAVPEKEVTPEKEAPAAEAEKSVSVKE) the composition is skewed to basic and acidic residues. Residues 89-157 (AEEVQKKALE…TTEVKVEEEK (69 aa)) are a coiled coil. Thr118 carries the phosphothreonine modification. Basic and acidic residues-rich tracts occupy residues 120-169 (VKEE…EKSS) and 176-190 (TKSE…EVTT). Phosphoserine is present on Ser195. Lys285 is covalently cross-linked (Glycyl lysine isopeptide (Lys-Gly) (interchain with G-Cter in ubiquitin)). Residues 295–468 (SGEEVSEFEK…KYGGLSKDTP (174 aa)) form the CRAL-TRIO domain. The region spanning 471 to 572 (EETITEAIVK…KKKVLYRFKT (102 aa)) is the GOLD domain.

The protein belongs to the patellin family. In terms of assembly, interacts with the deubiquitinating enzyme AMSH3. In terms of tissue distribution, expressed ubiquitously with higher levels in expanding roots and leaves (at protein level).

Its subcellular location is the membrane. It is found in the cytoplasm. In terms of biological role, carrier protein that may be involved in membrane-trafficking events associated with cell plate formation during cytokinesis. Binds to some hydrophobic molecules and promotes their transfer between the different cellular sites. Binds to phosphoinositides with a preference for PtdIns(5)P, PtdIns(4,5)P2 and PtdIns(3)P. The protein is Patellin-1 (PATL1) of Arabidopsis thaliana (Mouse-ear cress).